The following is a 143-amino-acid chain: Large ribosomal subunit protein bL28c (143 aa).

The transit peptide at 1 to 66 (MTTMATQGAW…SFPGIQPIVA (66 aa)) directs the protein to the chloroplast.

This sequence belongs to the bacterial ribosomal protein bL28 family. Part of the 50S ribosomal subunit.

It localises to the plastid. It is found in the chloroplast. In Arabidopsis thaliana (Mouse-ear cress), this protein is Large ribosomal subunit protein bL28c (RPL28).